Here is a 322-residue protein sequence, read N- to C-terminus: N-acetyl-gamma-glutamyl-phosphate reductase 2 (322 aa).

Cys117 is an active-site residue.

It belongs to the NAGSA dehydrogenase family. Type 2 subfamily.

It is found in the cytoplasm. It catalyses the reaction N-acetyl-L-glutamate 5-semialdehyde + phosphate + NADP(+) = N-acetyl-L-glutamyl 5-phosphate + NADPH + H(+). Its pathway is amino-acid biosynthesis; L-arginine biosynthesis; N(2)-acetyl-L-ornithine from L-glutamate: step 3/4. Functionally, catalyzes the NADPH-dependent reduction of N-acetyl-5-glutamyl phosphate to yield N-acetyl-L-glutamate 5-semialdehyde. In Nostoc sp. (strain PCC 7120 / SAG 25.82 / UTEX 2576), this protein is N-acetyl-gamma-glutamyl-phosphate reductase 2.